A 200-amino-acid polypeptide reads, in one-letter code: Ubiquinol-cytochrome-c reductase complex assembly factor 1 (200 aa).

It belongs to the CBP3 family.

It localises to the mitochondrion inner membrane. Required for the assembly of the ubiquinol-cytochrome c reductase complex (mitochondrial respiratory chain complex III or cytochrome b-c1 complex). May be involved in cytochrome b translation and/or stability. In Xenopus laevis (African clawed frog), this protein is Ubiquinol-cytochrome-c reductase complex assembly factor 1 (uqcc1).